Reading from the N-terminus, the 278-residue chain is Serine/threonine-protein phosphatase PGAM5, mitochondrial (278 aa).

Residues 7-27 (LIAGGSAAAAAAAILGAAAVG) traverse the membrane as a helical segment.

It belongs to the phosphoglycerate mutase family. BPG-dependent PGAM subfamily. In terms of processing, phosphorylated by the RIPK1/RIPK3 complex under necrotic conditions. This phosphorylation increases PGAM5 phosphatase activity.

Its subcellular location is the mitochondrion outer membrane. The catalysed reaction is O-phospho-L-seryl-[protein] + H2O = L-seryl-[protein] + phosphate. The enzyme catalyses O-phospho-L-threonyl-[protein] + H2O = L-threonyl-[protein] + phosphate. Functionally, displays phosphatase activity for serine/threonine residues. Has apparently no phosphoglycerate mutase activity. May be regulator of mitochondrial dynamics. May be a central mediator for programmed necrosis. In Xenopus tropicalis (Western clawed frog), this protein is Serine/threonine-protein phosphatase PGAM5, mitochondrial (pgam5).